An 861-amino-acid polypeptide reads, in one-letter code: Probable linoleate 9S-lipoxygenase 3 (861 aa).

A PLAT domain is found at F33–A160. In terms of domain architecture, Lipoxygenase spans P163 to I861. Residues T220–E247 are disordered. Positions 522, 527, 713, 717, and 861 each coordinate Fe cation.

It belongs to the lipoxygenase family. In terms of assembly, monomer. Fe cation serves as cofactor. Expressed in tubers and roots. Not detected in leaves, flowers, stems, shoot tips, or axillary buds.

Its subcellular location is the cytoplasm. The catalysed reaction is (9Z,12Z)-octadecadienoate + O2 = (9S)-hydroperoxy-(10E,12Z)-octadecadienoate. Its pathway is lipid metabolism; oxylipin biosynthesis. Its function is as follows. Plant lipoxygenases may be involved in a number of diverse aspects of plant physiology including growth and development, pest resistance, and senescence or responses to wounding. Catalyzes the hydroperoxidation of lipids containing a cis,cis-1,4-pentadiene structure. The chain is Probable linoleate 9S-lipoxygenase 3 (LOX1.3) from Solanum tuberosum (Potato).